The following is a 338-amino-acid chain: Beta-ketoacyl-[acyl-carrier-protein] synthase III (338 aa).

Catalysis depends on residues cysteine 119 and histidine 261. The tract at residues 262-266 is ACP-binding; the sequence is QANQR. Residue asparagine 291 is part of the active site.

It belongs to the thiolase-like superfamily. FabH family. As to quaternary structure, homodimer.

The protein localises to the cytoplasm. The enzyme catalyses malonyl-[ACP] + acetyl-CoA + H(+) = 3-oxobutanoyl-[ACP] + CO2 + CoA. It participates in lipid metabolism; fatty acid biosynthesis. Functionally, catalyzes the condensation reaction of fatty acid synthesis by the addition to an acyl acceptor of two carbons from malonyl-ACP. Catalyzes the first condensation reaction which initiates fatty acid synthesis and may therefore play a role in governing the total rate of fatty acid production. Possesses both acetoacetyl-ACP synthase and acetyl transacylase activities. Its substrate specificity determines the biosynthesis of branched-chain and/or straight-chain of fatty acids. The protein is Beta-ketoacyl-[acyl-carrier-protein] synthase III of Prochlorococcus marinus (strain SARG / CCMP1375 / SS120).